We begin with the raw amino-acid sequence, 182 residues long: uncharacterized protein (182 aa).

It belongs to the DNA 3' phosphatase family.

This is an uncharacterized protein from Autographa californica nuclear polyhedrosis virus (AcMNPV).